The following is a 382-amino-acid chain: 1-deoxy-D-xylulose 5-phosphate reductoisomerase (382 aa).

NADPH is bound by residues threonine 10, glycine 11, serine 12, isoleucine 13, glycine 36, lysine 37, asparagine 38, and asparagine 121. Lysine 122 contributes to the 1-deoxy-D-xylulose 5-phosphate binding site. Position 123 (glutamate 123) interacts with NADPH. Aspartate 147 lines the Mn(2+) pocket. Serine 148, glutamate 149, serine 173, and histidine 196 together coordinate 1-deoxy-D-xylulose 5-phosphate. A Mn(2+)-binding site is contributed by glutamate 149. Glycine 202 provides a ligand contact to NADPH. 1-deoxy-D-xylulose 5-phosphate contacts are provided by serine 209, asparagine 214, lysine 215, and glutamate 218. Mn(2+) is bound at residue glutamate 218.

It belongs to the DXR family. Mg(2+) is required as a cofactor. The cofactor is Mn(2+).

It catalyses the reaction 2-C-methyl-D-erythritol 4-phosphate + NADP(+) = 1-deoxy-D-xylulose 5-phosphate + NADPH + H(+). The protein operates within isoprenoid biosynthesis; isopentenyl diphosphate biosynthesis via DXP pathway; isopentenyl diphosphate from 1-deoxy-D-xylulose 5-phosphate: step 1/6. Catalyzes the NADPH-dependent rearrangement and reduction of 1-deoxy-D-xylulose-5-phosphate (DXP) to 2-C-methyl-D-erythritol 4-phosphate (MEP). This is 1-deoxy-D-xylulose 5-phosphate reductoisomerase from Halalkalibacterium halodurans (strain ATCC BAA-125 / DSM 18197 / FERM 7344 / JCM 9153 / C-125) (Bacillus halodurans).